The following is a 476-amino-acid chain: Cytochrome P450 6B5 (476 aa).

C443 serves as a coordination point for heme.

Belongs to the cytochrome P450 family. Heme serves as cofactor.

Its subcellular location is the endoplasmic reticulum membrane. The protein localises to the microsome membrane. The enzyme catalyses an organic molecule + reduced [NADPH--hemoprotein reductase] + O2 = an alcohol + oxidized [NADPH--hemoprotein reductase] + H2O + H(+). In terms of biological role, enables the insect to feed on furanocoumarin-producing plants and evolved as an adaptation for detoxification of xanthotoxin and other furanocoumarins. The chain is Cytochrome P450 6B5 (CYP6B5) from Papilio glaucus (Eastern tiger swallowtail butterfly).